The following is a 439-amino-acid chain: Cysteine--tRNA ligase (439 aa).

C28 lines the Zn(2+) pocket. The 'HIGH' region motif lies at I30–H40. Zn(2+) is bound by residues C209, H234, and E238. The short motif at K266 to S270 is the 'KMSKS' region element. ATP is bound at residue K269.

The protein belongs to the class-I aminoacyl-tRNA synthetase family. In terms of assembly, monomer. Zn(2+) serves as cofactor.

It is found in the cytoplasm. It catalyses the reaction tRNA(Cys) + L-cysteine + ATP = L-cysteinyl-tRNA(Cys) + AMP + diphosphate. The polypeptide is Cysteine--tRNA ligase (Shigella boydii serotype 4 (strain Sb227)).